The chain runs to 74 residues: Putative membrane protein insertion efficiency factor (74 aa).

This sequence belongs to the UPF0161 family.

It localises to the cell inner membrane. Its function is as follows. Could be involved in insertion of integral membrane proteins into the membrane. In Blochmanniella floridana, this protein is Putative membrane protein insertion efficiency factor.